Reading from the N-terminus, the 465-residue chain is A-type ATP synthase subunit B (465 aa).

It belongs to the ATPase alpha/beta chains family. In terms of assembly, has multiple subunits with at least A(3), B(3), C, D, E, F, H, I and proteolipid K(x).

It is found in the cell membrane. Its function is as follows. Component of the A-type ATP synthase that produces ATP from ADP in the presence of a proton gradient across the membrane. The B chain is a regulatory subunit. The sequence is that of A-type ATP synthase subunit B from Thermococcus onnurineus (strain NA1).